Here is a 468-residue protein sequence, read N- to C-terminus: Putative ankyrin repeat protein R580 (468 aa).

6 ANK repeats span residues 12–41 (DYFDPINLSIKDGGEKTIDIIDCERYTLID), 189–218 (VINKSLNFASKSNMSELAIFLVDNGAEINC), 249–278 (CHFDLVEAVFNSGSLEMIETFIDFGMKINS), 336–365 (SFDNALVSTINAGKFKNAEYLLFSGANINF), 367–393 (NMPTNCMFKINFQTIKFLIDNNFDLEI), and 394–423 (HGTLILNKSLLNGYYDCANILIENGVKFSL).

The protein is Putative ankyrin repeat protein R580 of Acanthamoeba polyphaga (Amoeba).